The chain runs to 329 residues: tRNA-modifying protein YgfZ (329 aa).

Folate contacts are provided by tryptophan 32 and tryptophan 190.

The protein belongs to the tRNA-modifying YgfZ family.

The protein localises to the cytoplasm. In terms of biological role, folate-binding protein involved in regulating the level of ATP-DnaA and in the modification of some tRNAs. It is probably a key factor in regulatory networks that act via tRNA modification, such as initiation of chromosomal replication. This Photobacterium profundum (strain SS9) protein is tRNA-modifying protein YgfZ.